The primary structure comprises 33 residues: Sucrose-6-phosphate hydrolase (33 aa).

Residue 15 to 18 (PLQE) participates in substrate binding. E18 is an active-site residue.

This sequence belongs to the glycosyl hydrolase 32 family.

The enzyme catalyses Hydrolysis of terminal non-reducing beta-D-fructofuranoside residues in beta-D-fructofuranosides.. The protein operates within glycan biosynthesis; sucrose metabolism. This is Sucrose-6-phosphate hydrolase from Fusobacterium mortiferum.